The sequence spans 664 residues: Intraflagellar transport protein 70B (664 aa).

TPR repeat units lie at residues 11-44, 45-78, 153-186, 188-220, 385-418, 423-456, and 458-491; these read DGEFTAVVYRLIRDSRYSEAVQLLSAELQGSPRS, RAGLSLLAYCYYRLQEFELAAECYEQLSQMHPEL, YDGQINLGCLLYKEGHYEAACSKFLAALQASGYQ, DISYNLALAYYSSRQYAPALKHIADIIERGIRQ, LTEQLRRLTIQVQDARHSRDDESAKKAVNDYDET, IPVLMAQAKIYWNLENYPMVEKIFRKSVEFCNDH, and VWKLNVAHVLFMQENKYKEAIGFYEPIVKKNYDN. Residues 507–534 are a coiled coil; that stretch reads YIMTSQNEEAEELMRKIEKEEEQLSYDD. Residues 543-576 form a TPR 8 repeat; sequence CIVNLVIGTLYCAKGNYDFGISRVIKSLEPYHKK.

The protein belongs to the TTC30/dfy-1/fleer family. In terms of assembly, interacts with the IFT B complex components IFT27, IFT46, IFT74, IFT52, IFT57, IFT80, IFT81 and IFT88. Interacts with KIF17.

The protein resides in the cell projection. Its subcellular location is the cilium. Required for polyglutamylation of axonemal tubulin. Plays a role in anterograde intraflagellar transport (IFT), the process by which cilia precursors are transported from the base of the cilium to the site of their incorporation at the tip. This is Intraflagellar transport protein 70B (Ift70b) from Rattus norvegicus (Rat).